A 269-amino-acid chain; its full sequence is 4-chlorobenzoyl coenzyme A dehalogenase (269 aa).

Substrate-binding positions include arginine 24 and 62-67; that span reads AGFYLR. Histidine 90 (proton acceptor) is an active-site residue. Glycine 114 contributes to the substrate binding site. Aspartate 145 serves as the catalytic Nucleophile. Arginine 257 contacts substrate.

This sequence belongs to the enoyl-CoA hydratase/isomerase family. In terms of assembly, homotetramer. Homotetramer, homooctamer and larger multimers. Homotrimer.

The catalysed reaction is 4-chlorobenzoyl-CoA + H2O = 4-hydroxybenzoyl-CoA + chloride + H(+). It functions in the pathway xenobiotic degradation; 4-chlorobenzoate degradation; 4-hydroxybenzoate from 4-chlorobenzoate: step 2/3. Inactivated by 1 mM Ag(+) and by 5 mM Cu(2+). Partially inhibited by 5 mM Zn(2+), Mn(2+), Co(2+), Fe(2+) and Ni(2+). Unaffected by 10 mM Na(+), K(+) and Li(+) and by 0.5 mM Mg(2+), Mn(2+), Fe(2+), Ca(2+), Co(2+) and Zn(2+). Inhibited by the sulfhydryl blocking agent 5,5'-dithio-bis-(2-nitrobenzoate), SDS and N-bromosuccinimide. Unaffected by sodium azide and EDTA. Inactivated following treatment with diethyl pyrocarbonate; this inactivation is reversible by treatment with hydroxylamine. Dehalogenates 4-chlorobenzoyl-CoA, 4-iodobenzoyl-CoA and 4-bromobenzoyl-CoA, but not 4-fluorobenzoyl-CoA. Inactive towards crotonyl-CoA, alpha-methylcrotonyl-CoA and beta-methylcrotonyl-CoA. This chain is 4-chlorobenzoyl coenzyme A dehalogenase, found in Pseudomonas sp. (strain CBS-3).